Reading from the N-terminus, the 95-residue chain is Small ribosomal subunit protein uS19 (95 aa).

Belongs to the universal ribosomal protein uS19 family.

Its function is as follows. Protein S19 forms a complex with S13 that binds strongly to the 16S ribosomal RNA. The protein is Small ribosomal subunit protein uS19 of Thermosipho melanesiensis (strain DSM 12029 / CIP 104789 / BI429).